We begin with the raw amino-acid sequence, 422 residues long: Keratin, type I cytoskeletal 23 (422 aa).

The segment covering M1 to R24 has biased composition (polar residues). The segment at M1 to H35 is disordered. A head region spans residues M1–N71. The tract at residues G72 to W107 is coil 1A. The region spanning G72–T382 is the IF rod domain. Residues H108–N125 form a linker 1 region. The interval I126–N217 is coil 1B. The linker 12 stretch occupies residues H218 to V240. The segment at L241 to D378 is coil 2. The tract at residues T379–I422 is rod-like helical tail.

The protein belongs to the intermediate filament family. As to quaternary structure, heterotetramer of two type I and two type II keratins.

In Mus musculus (Mouse), this protein is Keratin, type I cytoskeletal 23 (Krt23).